Consider the following 506-residue polypeptide: Alpha-L-arabinofuranosidase B (506 aa).

The N-terminal stretch at 1 to 26 is a signal peptide; it reads MSSGLSLERACAVALGIVASASLVAA. Positions 27–343 are catalytic; the sequence is GPCDIYSSGG…ADIVAAKYAI (317 aa). Cystine bridges form between Cys29/Cys39, Cys89/Cys94, and Cys184/Cys185. Asn91 carries N-linked (GlcNAc...) asparagine glycosylation. Asp227 contacts substrate. Catalysis depends on Glu229, which acts as the Nucleophile. Substrate contacts are provided by Asn230 and Gly304. Asp305 serves as the catalytic Proton donor. Residues 344-506 form an ABD region; that stretch reads ASLTSGPALT…VSWVVSTGFA (163 aa). Cys409 and Cys447 are disulfide-bonded. Substrate contacts are provided by His424, Asn426, Phe427, Asp443, His471, Glu473, Leu476, and Asp496.

This sequence belongs to the glycosyl hydrolase 54 family.

Its subcellular location is the secreted. The enzyme catalyses Hydrolysis of terminal non-reducing alpha-L-arabinofuranoside residues in alpha-L-arabinosides.. It participates in glycan metabolism; L-arabinan degradation. Functionally, alpha-L-arabinofuranosidase involved in the degradation of arabinoxylan, a major component of plant hemicellulose. Able to hydrolyze 1,5-, 1,3- and 1,2-alpha-linkages not only in L-arabinofuranosyl oligosaccharides, but also in polysaccharides containing terminal non-reducing L-arabinofuranoses in side chains, like L-arabinan, arabinogalactan and arabinoxylan. This chain is Alpha-L-arabinofuranosidase B (abfB), found in Aspergillus oryzae (strain ATCC 42149 / RIB 40) (Yellow koji mold).